A 315-amino-acid chain; its full sequence is Glutamine synthetase nodule isozyme (315 aa).

The 81-residue stretch at 19–99 (IIAEYIWVGG…VICDTYTPSG (81 aa)) folds into the GS beta-grasp domain. The GS catalytic domain maps to 106–315 (KRHAAAKIFS…WGVANRGASI (210 aa)).

The protein belongs to the glutamine synthetase family. Homooctamer.

It is found in the cytoplasm. The enzyme catalyses L-glutamate + NH4(+) + ATP = L-glutamine + ADP + phosphate + H(+). In Lupinus angustifolius (Narrow-leaved blue lupine), this protein is Glutamine synthetase nodule isozyme.